A 307-amino-acid chain; its full sequence is Glycine--tRNA ligase alpha subunit (307 aa).

This sequence belongs to the class-II aminoacyl-tRNA synthetase family. As to quaternary structure, tetramer of two alpha and two beta subunits.

The protein resides in the cytoplasm. It catalyses the reaction tRNA(Gly) + glycine + ATP = glycyl-tRNA(Gly) + AMP + diphosphate. This chain is Glycine--tRNA ligase alpha subunit (glyQ), found in Xylella fastidiosa (strain 9a5c).